Here is a 61-residue protein sequence, read N- to C-terminus: Large ribosomal subunit protein uL30 (61 aa).

It belongs to the universal ribosomal protein uL30 family. In terms of assembly, part of the 50S ribosomal subunit.

This chain is Large ribosomal subunit protein uL30, found in Acidithiobacillus ferrooxidans (strain ATCC 23270 / DSM 14882 / CIP 104768 / NCIMB 8455) (Ferrobacillus ferrooxidans (strain ATCC 23270)).